Here is a 120-residue protein sequence, read N- to C-terminus: UPF0102 protein HSM_1206 (120 aa).

It belongs to the UPF0102 family.

The sequence is that of UPF0102 protein HSM_1206 from Histophilus somni (strain 2336) (Haemophilus somnus).